The chain runs to 951 residues: Cadmium/zinc-transporting ATPase HMA2 (951 aa).

The Cytoplasmic segment spans residues Met-1–Lys-83. The region spanning Thr-7–Asn-73 is the HMA domain. A helical membrane pass occupies residues Asn-84 to Tyr-105. Over Leu-106–Ser-108 the chain is Extracellular. Residues Pro-109–Lys-128 form a helical membrane-spanning segment. Residues Ala-129–Arg-135 are Cytoplasmic-facing. A helical transmembrane segment spans residues Phe-136–Asp-156. Tyr-157 is a topological domain (extracellular). The helical transmembrane segment at Thr-158 to Ser-178 threads the bilayer. The Cytoplasmic segment spans residues Tyr-179 to Lys-304. The helical transmembrane segment at Cys-305–Leu-327 threads the bilayer. Residues Lys-328 to Trp-335 are Extracellular-facing. Residues Val-336 to Leu-353 traverse the membrane as a helical segment. The Cytoplasmic segment spans residues Ser-354–Val-647. The active-site 4-aspartylphosphate intermediate is Asp-391. Residues Asp-592 and Asp-596 each coordinate Mg(2+). The helical transmembrane segment at Val-648 to Ala-667 threads the bilayer. Residues Gly-668 to Leu-671 lie on the Extracellular side of the membrane. Residues Ile-672–Met-691 traverse the membrane as a helical segment. At Leu-692–Glu-951 the chain is on the cytoplasmic side. Over residues Glu-841 to Ser-851 the composition is skewed to basic and acidic residues. The disordered stretch occupies residues Glu-841–Thr-866.

This sequence belongs to the cation transport ATPase (P-type) (TC 3.A.3) family. Type IB subfamily. In terms of tissue distribution, predominantly expressed in the vascular tissues of roots, stems, and leaves. Also detected in developing anthers.

The protein resides in the cell membrane. The catalysed reaction is Zn(2+)(in) + ATP + H2O = Zn(2+)(out) + ADP + phosphate + H(+). The enzyme catalyses Cd(2+)(in) + ATP + H2O = Cd(2+)(out) + ADP + phosphate + H(+). Its function is as follows. Plays an important role in zinc transport and homeostasis. Could also be involved in cadmium detoxification. The chain is Cadmium/zinc-transporting ATPase HMA2 (HMA2) from Arabidopsis thaliana (Mouse-ear cress).